The following is a 241-amino-acid chain: tRNA pseudouridine synthase B (241 aa).

Asp-45 serves as the catalytic Nucleophile.

Belongs to the pseudouridine synthase TruB family. Type 1 subfamily.

The catalysed reaction is uridine(55) in tRNA = pseudouridine(55) in tRNA. Responsible for synthesis of pseudouridine from uracil-55 in the psi GC loop of transfer RNAs. In Chlamydia trachomatis serovar L2 (strain ATCC VR-902B / DSM 19102 / 434/Bu), this protein is tRNA pseudouridine synthase B.